Consider the following 132-residue polypeptide: Extracellular small neutral protease (132 aa).

Ca(2+)-binding residues include Asp-76 and Thr-78. His-83 lines the Zn(2+) pocket. The active site involves Glu-84. Zn(2+) is bound by residues His-87 and Asp-93. Cys-99 and Cys-112 are oxidised to a cystine.

It belongs to the peptidase M7 family. Requires Ca(2+) as cofactor. Zn(2+) is required as a cofactor.

It localises to the secreted. It catalyses the reaction Hydrolyzes proteins with a preference for Tyr or Phe in the P1' position. Has no action on amino-acid p-nitroanilides.. Its function is as follows. Specifically hydrolyzes the peptide bond at the imino side of aromatic residues. The chain is Extracellular small neutral protease (snpA) from Streptomyces caespitosus.